A 69-amino-acid polypeptide reads, in one-letter code: Large ribosomal subunit protein uL29 (69 aa).

The protein belongs to the universal ribosomal protein uL29 family.

This chain is Large ribosomal subunit protein uL29, found in Thermoanaerobacter pseudethanolicus (strain ATCC 33223 / 39E) (Clostridium thermohydrosulfuricum).